Reading from the N-terminus, the 323-residue chain is Tetraacyldisaccharide 4'-kinase (323 aa).

56–63 is an ATP binding site; it reads TVGGVGKT.

The protein belongs to the LpxK family.

The catalysed reaction is a lipid A disaccharide + ATP = a lipid IVA + ADP + H(+). Its pathway is glycolipid biosynthesis; lipid IV(A) biosynthesis; lipid IV(A) from (3R)-3-hydroxytetradecanoyl-[acyl-carrier-protein] and UDP-N-acetyl-alpha-D-glucosamine: step 6/6. In terms of biological role, transfers the gamma-phosphate of ATP to the 4'-position of a tetraacyldisaccharide 1-phosphate intermediate (termed DS-1-P) to form tetraacyldisaccharide 1,4'-bis-phosphate (lipid IVA). This Legionella pneumophila (strain Lens) protein is Tetraacyldisaccharide 4'-kinase.